The chain runs to 236 residues: Aspartate/glutamate leucyltransferase (236 aa).

The protein belongs to the R-transferase family. Bpt subfamily.

It is found in the cytoplasm. It carries out the reaction N-terminal L-glutamyl-[protein] + L-leucyl-tRNA(Leu) = N-terminal L-leucyl-L-glutamyl-[protein] + tRNA(Leu) + H(+). The catalysed reaction is N-terminal L-aspartyl-[protein] + L-leucyl-tRNA(Leu) = N-terminal L-leucyl-L-aspartyl-[protein] + tRNA(Leu) + H(+). Functionally, functions in the N-end rule pathway of protein degradation where it conjugates Leu from its aminoacyl-tRNA to the N-termini of proteins containing an N-terminal aspartate or glutamate. The protein is Aspartate/glutamate leucyltransferase of Saccharophagus degradans (strain 2-40 / ATCC 43961 / DSM 17024).